A 206-amino-acid polypeptide reads, in one-letter code: Ribonuclease HII (206 aa).

The region spanning 22–206 (RFICGVDEAG…ISFLKNILSL (185 aa)) is the RNase H type-2 domain. Residues D28, E29, and D120 each contribute to the a divalent metal cation site.

This sequence belongs to the RNase HII family. Requires Mn(2+) as cofactor. Mg(2+) is required as a cofactor.

It is found in the cytoplasm. The enzyme catalyses Endonucleolytic cleavage to 5'-phosphomonoester.. Functionally, endonuclease that specifically degrades the RNA of RNA-DNA hybrids. The polypeptide is Ribonuclease HII (Caldicellulosiruptor bescii (strain ATCC BAA-1888 / DSM 6725 / KCTC 15123 / Z-1320) (Anaerocellum thermophilum)).